The following is a 202-amino-acid chain: GMP synthase [glutamine-hydrolyzing] subunit A (202 aa).

The Glutamine amidotransferase type-1 domain occupies lysine 4 to lysine 194. Catalysis depends on cysteine 81, which acts as the Nucleophile. Active-site residues include histidine 168 and glutamate 170.

Heterodimer composed of a glutamine amidotransferase subunit (A) and a GMP-binding subunit (B).

It catalyses the reaction XMP + L-glutamine + ATP + H2O = GMP + L-glutamate + AMP + diphosphate + 2 H(+). The protein operates within purine metabolism; GMP biosynthesis; GMP from XMP (L-Gln route): step 1/1. Catalyzes the synthesis of GMP from XMP. This chain is GMP synthase [glutamine-hydrolyzing] subunit A, found in Thermoplasma volcanium (strain ATCC 51530 / DSM 4299 / JCM 9571 / NBRC 15438 / GSS1).